Reading from the N-terminus, the 158-residue chain is NADH-quinone oxidoreductase subunit B (158 aa).

Residues Cys-37, Cys-38, Cys-102, and Cys-132 each contribute to the [4Fe-4S] cluster site.

This sequence belongs to the complex I 20 kDa subunit family. In terms of assembly, NDH-1 is composed of 14 different subunits. Subunits NuoB, C, D, E, F, and G constitute the peripheral sector of the complex. [4Fe-4S] cluster serves as cofactor.

Its subcellular location is the cell inner membrane. The catalysed reaction is a quinone + NADH + 5 H(+)(in) = a quinol + NAD(+) + 4 H(+)(out). Functionally, NDH-1 shuttles electrons from NADH, via FMN and iron-sulfur (Fe-S) centers, to quinones in the respiratory chain. The immediate electron acceptor for the enzyme in this species is believed to be ubiquinone. Couples the redox reaction to proton translocation (for every two electrons transferred, four hydrogen ions are translocated across the cytoplasmic membrane), and thus conserves the redox energy in a proton gradient. In Halorhodospira halophila (strain DSM 244 / SL1) (Ectothiorhodospira halophila (strain DSM 244 / SL1)), this protein is NADH-quinone oxidoreductase subunit B.